We begin with the raw amino-acid sequence, 2057 residues long: Fer-1-like protein 5 (2057 aa).

7 consecutive C2 domains span residues 1 to 99, 152 to 265, 308 to 425, 1057 to 1188, 1213 to 1346, 1467 to 1587, and 1705 to 1853; these read MLRL…VLFV, PGST…TLLR, DDTD…EGVY, DTRP…MRWH, KLGE…AQDY, PKPP…AHCG, and GPPG…KQCS. Positions 1502, 1508, 1557, 1558, 1559, 1562, 1565, 1824, 1827, and 1830 each coordinate Ca(2+). A helical membrane pass occupies residues 1962-1982; that stretch reads LIAFMVISIIALMLFNFIYSA.

This sequence belongs to the ferlin family. As to quaternary structure, interacts (via second C2 domain) with EHD1 and EHD2. Ca(2+) serves as cofactor.

Its subcellular location is the cell membrane. It localises to the membrane. Its function is as follows. Plays a role in myoblast fusion; probable mediator of endocytic recycling for membrane trafficking events during myotube formation. The sequence is that of Fer-1-like protein 5 (FER1L5) from Homo sapiens (Human).